A 1077-amino-acid chain; its full sequence is Receptor-like protein 1 (1077 aa).

Residues 1 to 38 (MRTDERRRWWVKPKKHITLVFITITMIIQFQMKGCVSC) form the signal peptide. The segment at 39–120 (VETERMGLLQ…SQTRSLNLSL (82 aa)) is N-cap. The Extracellular portion of the chain corresponds to 39–1024 (VETERMGLLQ…NEEEGNVIDM (986 aa)). N-linked (GlcNAc...) asparagine glycans are attached at residues Asn-117, Asn-131, and Asn-139. LRR repeat units lie at residues 124 to 147 (FPQLQSLNLSWNWFTNLSDHFLGF), 153 to 176 (LDKLTTLDFSHNMFDNSIVPFLNA), 177 to 201 (ATSIRSLHLESNYMEGVFPPQELSN), 202 to 225 (MTNLRVLNLKDNSFSFLSSQGLTD), 227 to 250 (RDLEVLDLSFNGVNDSEASHSLST), 251 to 274 (AKLKTLDLNFNPLSDFSQLKGLES), 275 to 299 (LQELQVLKLRGNKFNHTLSTHVLKD), 300 to 324 (LKMLQELDLSDNGFTNLDHGRGLEI), 326 to 348 (TSLQVLDFKRNQLSLTHEGYLGI), 351 to 376 (LMKLRELDLSSNALTSLPYCLGNLTH), 378 to 397 (RTLDLSNNQLNGNLSSFVSG), and 399 to 424 (PSVLEYLSLLDNNFDGSFLFNSLVNQ). The N-linked (GlcNAc...) asparagine glycan is linked to Asn-201. Asn-240 carries an N-linked (GlcNAc...) asparagine glycan. Asn-289 is a glycosylation site (N-linked (GlcNAc...) asparagine). 3 N-linked (GlcNAc...) asparagine glycosylation sites follow: Asn-373, Asn-390, and Asn-423. The LRR 13; degenerate repeat unit spans residues 425-449 (TRLTVFKLSSKVGVIQVQTESSWAP). 19 LRR repeats span residues 450–473 (LFQLKMLYLSNCSLGSTMLGFLVH), 474–498 (QRDLCFVDLSHNKLTGTFPTWLVKN), 499–522 (NTRLQTILLSGNSLTKLQLPILVH), 524–545 (LQVLDISSNMIYDSIQEDIGMV), 546–570 (FPNLRFMNFSSNHFQGTIPSSIGEM), 572–594 (SLQVLDMSSNGLYGQLPIMFLSG), 595–621 (CYSLRVLKLSNNQLQGKIFSKHANLTG), 623–643 (VGLFLDGNNFTGSLEEGLLKS), 644–666 (KNLTLLDISDNRFSGMLPLWIGR), 667–694 (ISRLSYLYMSGNQLKGPFPFLRQSPWVE), 696–713 (MDISHNSFSGSIPRNVNF), 714–737 (PSLRELRLQNNEFTGLVPGNLFKA), 739–761 (GLEVLDLRNNNFSGKILNTIDQT), 762–785 (SKLRILLLRNNSFQTYIPGKICQL), 786–808 (SEVGLLDLSHNQFRGPIPSCFSK), 877–901 (LRYMHGLDLSSNELSGEIPIEIGDL), 902–925 (QNIRSLNLSSNRLTGSIPDSISKL), 927–949 (GLESLDLSNNKLDGSIPPALADL), and 951–970 (SLGYLNISYNNLSGEIPFKG). Asn-460 and Asn-498 each carry an N-linked (GlcNAc...) asparagine glycan. Asn-553 is a glycosylation site (N-linked (GlcNAc...) asparagine). N-linked (GlcNAc...) asparagine glycans are attached at residues Asn-618, Asn-631, and Asn-645. Residues Asn-749 and Asn-771 are each glycosylated (N-linked (GlcNAc...) asparagine). Asn-908 carries an N-linked (GlcNAc...) asparagine glycan. Residues Asn-956 and Asn-961 are each glycosylated (N-linked (GlcNAc...) asparagine). Residues 971-1024 (HLVTFDERSYIGNAHLCGLPTNKNCISQRVPEPPSVSTHAKEEENEEEGNVIDM) form a C-cap/acidic domain region. Residues 1025–1045 (VWFYWTCAAVYISTSLALFAF) form a helical membrane-spanning segment. Residues 1046 to 1077 (LYIDSRWSREWFYRVDLCVHHILQFKRSSVCN) are Cytoplasmic-facing.

Belongs to the RLP family.

The protein resides in the cell membrane. Involved in plant defense. Confers resistance to the bacterial pathogen Xanthomonas through recognition of the microbe-associated molecular pattern (MAMP) eMax. Functionality seems to depend on the presence of the receptor kinase SOBIR1 as an adapter protein. The chain is Receptor-like protein 1 from Arabidopsis thaliana (Mouse-ear cress).